Reading from the N-terminus, the 643-residue chain is uncharacterized protein (643 aa).

The span at 179–199 (FKSSQLQQSPSPNKKSPSYSQ) shows a compositional bias: low complexity. Disordered regions lie at residues 179–200 (FKSS…YSQV) and 349–377 (KRSN…STEN).

This is an uncharacterized protein from Caenorhabditis elegans.